The primary structure comprises 350 residues: Renin receptor (350 aa).

Positions 1 to 17 (MAVLVVLLFFLVAGALG) are cleaved as a signal peptide. The Extracellular segment spans residues 18–302 (NEFSILRSPG…YNLAYKYNLE (285 aa)). Residues 303–323 (YSVVFNLVLWIMIGLALAVII) form a helical membrane-spanning segment. The Cytoplasmic portion of the chain corresponds to 324–350 (TSYNIWNMDPGYDSIIYRMTNQKIRID). Residues 346–350 (KIRID) carry the Mediates retrograde transport to the ER motif.

As to quaternary structure, interacts with renin. Accessory component of the multisubunit proton-transporting vacuolar (V)-ATPase protein pump. Interacts (via N-terminus) with ATP6AP1 (via N-terminus). Interacts with ATP6V0D1; ATP6V0D1 is a V-ATPase complex subunit and the interaction promotes V-ATPase complex assembly. Interacts with TMEM9; TMEM9 is a V-ATPase assembly regulator and the interaction induces the interaction with ATP6V0D1. Interacts with VMA21 (via N-terminus); VMA21 is a V-ATPase accessory component. Post-translationally, phosphorylated. Proteolytically cleaved by a furin-like convertase in the trans-Golgi network to generate N- and C-terminal fragments. As to expression, expressed in glutamatergic and GABAergic neurons with highest levels in the cortex, the hippocampus, the medial habenular nucleus, the cerebellum, the medulla and the olfactory bulb (at protein level).

It localises to the endoplasmic reticulum membrane. The protein localises to the lysosome membrane. The protein resides in the cytoplasmic vesicle. It is found in the autophagosome membrane. Its subcellular location is the cell projection. It localises to the dendritic spine membrane. The protein localises to the axon. The protein resides in the endosome membrane. It is found in the clathrin-coated vesicle membrane. Its subcellular location is the secretory vesicle. It localises to the synaptic vesicle membrane. Its function is as follows. Multifunctional protein which functions as a renin, prorenin cellular receptor and is involved in the assembly of the lysosomal proton-transporting V-type ATPase (V-ATPase) and the acidification of the endo-lysosomal system. May mediate renin-dependent cellular responses by activating ERK1 and ERK2. By increasing the catalytic efficiency of renin in AGT/angiotensinogen conversion to angiotensin I, may also play a role in the renin-angiotensin system (RAS). Through its function in V-type ATPase (v-ATPase) assembly and acidification of the lysosome it regulates protein degradation and may control different signaling pathways important for proper brain development, synapse morphology and synaptic transmission. The chain is Renin receptor from Mus musculus (Mouse).